A 510-amino-acid polypeptide reads, in one-letter code: Aromatic-L-amino-acid decarboxylase (510 aa).

Polar residues predominate over residues 1-17 (MSHIPISNTIPTKQTDG). A disordered region spans residues 1–28 (MSHIPISNTIPTKQTDGNGKANISPDKL). Residue T117 coordinates substrate. The pyridoxal 5'-phosphate site is built by A183, S184, H227, D305, and N334. Residue H227 coordinates substrate. H227 is a catalytic residue. N6-(pyridoxal phosphate)lysine is present on K337. The disordered stretch occupies residues 358-384 (NAFNVDPLYLKHDMQGSAPDYRHWQIP).

This sequence belongs to the group II decarboxylase family. In terms of assembly, homodimer. It depends on pyridoxal 5'-phosphate as a cofactor. In terms of tissue distribution, hypoderm isoform is expressed only in hypodermal epithelium and the CNS isoform only in central nervous system. Expressed in the adult head (at protein level).

It catalyses the reaction L-dopa + H(+) = dopamine + CO2. The enzyme catalyses 5-hydroxy-L-tryptophan + H(+) = serotonin + CO2. Catalyzes the decarboxylation of L-3,4-dihydroxyphenylalanine (L-DOPA) to dopamine and L-5-hydroxytryptophan (5-HTP) to serotonin. Catalyzes the formation of serotonin more efficiently than dopamine. Displays no activity to tyrosine. Variation in the synthesis of bioamines may be a factor contributing to natural variation in life span. The protein is Aromatic-L-amino-acid decarboxylase (Ddc) of Drosophila melanogaster (Fruit fly).